Consider the following 472-residue polypeptide: Cannabinoid receptor 1 (472 aa).

The Extracellular portion of the chain corresponds to 1 to 116 (MKSILDGLAD…CFMVLNPSQQ (116 aa)). The required for mitochondrial localization stretch occupies residues 2–23 (KSILDGLADTTFRTITTDLLYV). Residues Asn-77 and Asn-83 are each glycosylated (N-linked (GlcNAc...) asparagine). Residues 117 to 142 (LAIAVLSLTLGTFTVLENLLVLCVIL) traverse the membrane as a helical segment. Topologically, residues 143–154 (HSRSLRCRPSYH) are cytoplasmic. The chain crosses the membrane as a helical span at residues 155–175 (FIGSLAVADLLGSVIFVYSFI). Over 176-187 (DFHVFHRKDSRN) the chain is Extracellular. A helical transmembrane segment spans residues 188 to 212 (VFLFKLGGVTASFTASVGSLFLTAI). Over 213-232 (DRYISIHRPLAYKRIVTRPK) the chain is Cytoplasmic. The helical transmembrane segment at 233 to 255 (AVVAFCLMWTIAIVIAVLPLLGW) threads the bilayer. The Extracellular portion of the chain corresponds to 256–273 (NCEKLQSVCSDIFPHIDE). A helical transmembrane segment spans residues 274–299 (TYLMFWIGVTSVLLLFIVYAYMYILW). The Cytoplasmic segment spans residues 300–344 (KAHSHAVRMIQRGTQKSIIIHTSEDGKVQVTRPDQARMDIRLAKT). Residues 345–365 (LVLILVVLIICWGPLLAIMVY) form a helical membrane-spanning segment. Residues 366–377 (DVFGKMNKLIKT) lie on the Extracellular side of the membrane. Residues 378-399 (VFAFCSMLCLLNSTVNPIIYAL) form a helical membrane-spanning segment. The Cytoplasmic segment spans residues 400–472 (RSKDLRHAFR…VSTDTSAEAL (73 aa)). The S-palmitoyl cysteine moiety is linked to residue Cys-415. Phosphoserine occurs at positions 425 and 429.

Belongs to the G-protein coupled receptor 1 family. In terms of assembly, interacts (via C-terminus) with CNRIP1; this interaction attenuates constitutive, but not agonist-dependent, inhibition of voltage-gated Ca(2+) channels in neurons. Associates with G protein alpha subunits, including G(i) alpha-1/GNAI1, G(i) alpha-3/GNAI3 and G(o)-alpha/GNAO1; palmitoylation is important for interaction with GNAI3 and GNAO1. Post-translationally, palmitoylation at Cys-415 is important for recruitment at plasma membrane and lipid rafts and association with G protein alpha subunits. As to expression, widely expressed, with highest levels in fetal and adult brain. Expression levels of isoform 2 and isoform 3 are much lower than those of isoform 1.

Its subcellular location is the cell membrane. It localises to the membrane raft. The protein resides in the mitochondrion outer membrane. It is found in the cell projection. The protein localises to the axon. Its subcellular location is the presynapse. Its activity is regulated as follows. Hemopressin, a peptide derived from hemoglobin subunit alpha (HBA1 and/or HBA2), acts as an antagonist peptide: hemopressin-binding efficiently blocks cannabinoid receptor CNR1 and subsequent signaling. G-protein coupled receptor for endogenous cannabinoids (eCBs), including N-arachidonoylethanolamide (also called anandamide or AEA) and 2-arachidonoylglycerol (2-AG), as well as phytocannabinoids, such as delta(9)-tetrahydrocannabinol (THC). Mediates many cannabinoid-induced effects, acting, among others, on food intake, memory loss, gastrointestinal motility, catalepsy, ambulatory activity, anxiety, chronic pain. Signaling typically involves reduction in cyclic AMP. In the hypothalamus, may have a dual effect on mitochondrial respiration depending upon the agonist dose and possibly upon the cell type. Increases respiration at low doses, while decreases respiration at high doses. At high doses, CNR1 signal transduction involves G-protein alpha-i protein activation and subsequent inhibition of mitochondrial soluble adenylate cyclase, decrease in cyclic AMP concentration, inhibition of protein kinase A (PKA)-dependent phosphorylation of specific subunits of the mitochondrial electron transport system, including NDUFS2. In the hypothalamus, inhibits leptin-induced reactive oxygen species (ROS) formation and mediates cannabinoid-induced increase in SREBF1 and FASN gene expression. In response to cannabinoids, drives the release of orexigenic beta-endorphin, but not that of melanocyte-stimulating hormone alpha/alpha-MSH, from hypothalamic POMC neurons, hence promoting food intake. In the hippocampus, regulates cellular respiration and energy production in response to cannabinoids. Involved in cannabinoid-dependent depolarization-induced suppression of inhibition (DSI), a process in which depolarization of CA1 postsynaptic pyramidal neurons mobilizes eCBs, which retrogradely activate presynaptic CB1 receptors, transiently decreasing GABAergic inhibitory neurotransmission. Also reduces excitatory synaptic transmission. In superior cervical ganglions and cerebral vascular smooth muscle cells, inhibits voltage-gated Ca(2+) channels in a constitutive, as well as agonist-dependent manner. In cerebral vascular smooth muscle cells, cannabinoid-induced inhibition of voltage-gated Ca(2+) channels leads to vasodilation and decreased vascular tone. Induces leptin production in adipocytes and reduces LRP2-mediated leptin clearance in the kidney, hence participating in hyperleptinemia. In adipose tissue, CNR1 signaling leads to increased expression of SREBF1, ACACA and FASN genes. In the liver, activation by endocannabinoids leads to increased de novo lipogenesis and reduced fatty acid catabolism, associated with increased expression of SREBF1/SREBP-1, GCK, ACACA, ACACB and FASN genes. May also affect de novo cholesterol synthesis and HDL-cholesteryl ether uptake. Peripherally modulates energy metabolism. In high carbohydrate diet-induced obesity, may decrease the expression of mitochondrial dihydrolipoyl dehydrogenase/DLD in striated muscles, as well as that of selected glucose/ pyruvate metabolic enzymes, hence affecting energy expenditure through mitochondrial metabolism. In response to cannabinoid anandamide, elicits a pro-inflammatory response in macrophages, which involves NLRP3 inflammasome activation and IL1B and IL18 secretion. In macrophages infiltrating pancreatic islets, this process may participate in the progression of type-2 diabetes and associated loss of pancreatic beta-cells. In terms of biological role, binds both 2-arachidonoylglycerol (2-AG) and anandamide. Its function is as follows. Only binds 2-arachidonoylglycerol (2-AG) with high affinity. Contrary to its effect on isoform 1, 2-AG behaves as an inverse agonist on isoform 2 in assays measuring GTP binding to membranes. Functionally, only binds 2-arachidonoylglycerol (2-AG) with high affinity. Contrary to its effect on isoform 1, 2-AG behaves as an inverse agonist on isoform 3 in assays measuring GTP binding to membranes. The chain is Cannabinoid receptor 1 (CNR1) from Homo sapiens (Human).